A 380-amino-acid polypeptide reads, in one-letter code: Dynactin subunit 2 (380 aa).

Positions 1–32 (MADPKFQNLPGIAYDQPDVYETPDDPELDTSD) are disordered. Residues 21–32 (ETPDDPELDTSD) show a composition bias toward acidic residues. Phosphoserine occurs at positions 49, 58, and 86. Coiled-coil stretches lie at residues 100–135 (VQKC…QSYD) and 353–377 (ETFA…AAIS).

The protein belongs to the dynactin subunit 2 family. Subunit of dynactin, a multiprotein complex associated with dynein.

Its subcellular location is the cytoplasm. It is found in the cytoskeleton. The protein resides in the membrane. Its function is as follows. Modulates cytoplasmic dynein binding to an organelle, and plays a role in prometaphase chromosome alignment and spindle organization during mitosis. May play a role in synapse formation during brain development. The chain is Dynactin subunit 2 from Drosophila melanogaster (Fruit fly).